The primary structure comprises 688 residues: MDNWEDPNFELRNLRVIDLKKILHESGVSFPVNARKIEYIRMVDRIRKNKLSSGPQHLLSHLQKEENSNTSKASSSEDEIAPKYLYPSSPSKSTKKPHNETEPLLSPQFIDKPSNIETPVKIESPHVSQNNTFQSYSELSPNVETSLTMKTPPAHASTPKFRSHKSHRVAVPMSFMDSSALHTSPAFSERLKLLSSSNNFSPQLRSPKISHRLQTSATSSPLQHKRPFTNVPERVSRDIEFAPLDSARPSESSSPYSEVDSAEEDDELFQNYVLQQTRKESKLWSFIKKVFHDIKYANYRLLHNLRAFPGISAISSSYLVHIFMILLGVVAAIFLALLREKMFTAGFCDSGASGSSASILGISFPSLCRTCPPNAICPSPNYVECKPGYVLYEPWYSSLGFWPSKYCVSDTSREESVNIFREECLSVLRSWNAILHCSNNSSDLLERNMSYNAHPYVADNLNISSDHISFPSKPFALGLLHDTLLERKSPTLGLEMFEDLFKASLAVLSETNEVVMDSKLICYDSWAGIPLRCRLKQQLIKFVWRNKVFLFGILALSGVIFKLINFFRTRSIVAKYLPSASRFCVESLKRQKANYQMSRSQEPVIPLIEMHDILFHGNGPLEQIHMTKATARTLWEAIVERVEQVGSVRTRESEVDGEWTRVWEWVGTNTLDFQTDRSFINTTSPLRE.

2 disordered regions span residues 62–113 and 202–227; these read LQKE…IDKP and PQLR…HKRP. Low complexity predominate over residues 82–92; it reads PKYLYPSSPSK. Residues 212–222 show a composition bias toward polar residues; the sequence is RLQTSATSSPL. Transmembrane regions (helical) follow at residues 318–338 and 547–567; these read YLVH…LALL and KVFL…INFF. Thr683 is modified (phosphothreonine). Position 684 is a phosphoserine (Ser684).

Its subcellular location is the nucleus inner membrane. Nucleus inner membrane protein involved in meiosis. Plays a role in regulating nuclear envelope (NE) morphology and nuclear integrity, particularly during spindle pole body (SPB) extrusion or insertion through the NE, and perhaps during karyokinesis. The protein is Lap-Emerin-Man domain protein 2 (lem2) of Schizosaccharomyces pombe (strain 972 / ATCC 24843) (Fission yeast).